The chain runs to 316 residues: Lipooligosaccharide heptosyltransferase 2 (316 aa).

The protein belongs to the glycosyltransferase 9 family.

The catalysed reaction is an L-alpha-D-Hep-(1-&gt;5)-[alpha-Kdo-(2-&gt;4)]-alpha-Kdo-(2-&gt;6)-lipid A + ADP-L-glycero-beta-D-manno-heptose = an L-alpha-D-Hep-(1-&gt;3)-L-alpha-D-Hep-(1-&gt;5)-[alpha-Kdo-(2-&gt;4)]-alpha-Kdo-(2-&gt;6)-lipid A + ADP + H(+). It functions in the pathway bacterial outer membrane biogenesis; LOS core biosynthesis. Functionally, glycosyltransferase involved in the biosynthesis of the core oligosaccharide region of lipooligosaccharide (LOS). Catalyzes the addition of the second heptose unit to the heptosyl-Kdo2-lipid A module. In Campylobacter jejuni subsp. jejuni serotype O:6 (strain 81116 / NCTC 11828), this protein is Lipooligosaccharide heptosyltransferase 2.